The primary structure comprises 128 residues: MTHSSQDAGSHGIQEEGRLYVVDSINDLNKLSLCPMESQHLFSLEDKIPNAGTAPGNGRRGLFFVGLLLVLTVSLALVFFAIFLIIQTGNQMEDVSRRLTAEGKDIDDLKKINNMIVKRLNQLDSEQN.

Serine 24 is modified (phosphoserine). Residues 66-86 (GLLLVLTVSLALVFFAIFLII) form a helical membrane-spanning segment. Residues 90–111 (NQMEDVSRRLTAEGKDIDDLKK) are a coiled coil.

Its subcellular location is the membrane. This chain is Leucine-rich single-pass membrane protein 1 (Lsmem1), found in Mus musculus (Mouse).